The following is a 176-amino-acid chain: MTTIVSVRRNGHVVIAGDGQATLGNTVMKGNVKKVRRLYNDKVIAGFAGGTADAFTLFELFERKLEMHQGHLVKAAVELAKDWRTDRMLRKLEALLAVADENASLIITGNGDVVQPENDLIAIGSGGPYAQAAARALLENTDMGARDIAEKALDIAGDICIYTNHFHTIEELPSKA.

Thr2 is a catalytic residue. Positions 157, 160, and 163 each coordinate Na(+).

It belongs to the peptidase T1B family. HslV subfamily. A double ring-shaped homohexamer of HslV is capped on each side by a ring-shaped HslU homohexamer. The assembly of the HslU/HslV complex is dependent on binding of ATP.

Its subcellular location is the cytoplasm. It carries out the reaction ATP-dependent cleavage of peptide bonds with broad specificity.. Its activity is regulated as follows. Allosterically activated by HslU binding. Its function is as follows. Protease subunit of a proteasome-like degradation complex believed to be a general protein degrading machinery. This Klebsiella pneumoniae (strain 342) protein is ATP-dependent protease subunit HslV.